The sequence spans 452 residues: uncharacterized protein (452 aa).

An N-terminal signal peptide occupies residues 1–20 (MQFFGSLFVSLLGAAGLANA). A disordered region spans residues 130–151 (TQSSSNSTSTMNSTGSVSGGSV).

The protein resides in the endoplasmic reticulum. This is an uncharacterized protein from Schizosaccharomyces pombe (strain 972 / ATCC 24843) (Fission yeast).